The chain runs to 230 residues: Transmembrane protein 221 (230 aa).

4 helical membrane passes run 12-32, 73-93, 125-145, and 147-167; these read AMTLLGIPAAVLVALAAQLLF, ALAALAQVLGLSCLLLAALCG, LFCCGVSVYLAALAIYALLLF, and IEAGAAAASILGSGALILVAI. Residues 184–230 are disordered; it reads RELSPPSFEDEPARPSEDSKSGCRAQPPQDEETETPIGAVTHQGSHF. A compositionally biased stretch (basic and acidic residues) spans 194-204; the sequence is EPARPSEDSKS.

The protein resides in the membrane. In Mus musculus (Mouse), this protein is Transmembrane protein 221 (Tmem221).